The chain runs to 457 residues: Transcription factor E2F3 (457 aa).

Positions 80–171 (LLPSVPGTEP…PKSPSEKTRY (92 aa)) are disordered. Residues 93–102 (SLYTTPQGPS) show a composition bias toward polar residues. A cyclin A/CDK2 binding region spans residues 96 to 145 (TTPQGPSSRVGLLQQPPAPGRGGGGGPPAKRRLELGESGHQYLSDGLKTP). A DNA-binding region spans residues 147–237 (GKGRAALRSP…KNNVQWMGCS (91 aa)). Residues 155–164 (SPDSPKTPKS) are compositionally biased toward low complexity. Residues 196–217 (LNKAAEVLKVQKRRIYDITNVL) form a leucine-zipper region. Positions 201–237 (EVLKVQKRRIYDITNVLEGIHLIKKKSKNNVQWMGCS) match the DEF box motif. Residues 238-329 (LSEDGGMLAQ…VPDSIESLQI (92 aa)) are dimerization. The segment at 350-387 (HRPMKTNNQDHNGNIPKPTSKDLASNNSGHSDCSVSTA) is disordered. The span at 371-387 (DLASNNSGHSDCSVSTA) shows a compositional bias: polar residues. The segment at 383–457 (SVSTANLSPL…LPLVEDFMCS (75 aa)) is transactivation. The retinoblastoma protein binding stretch occupies residues 424–441 (EDYLLSLGEEEGISDLFD).

The protein belongs to the E2F/DP family. In terms of assembly, component of the DRTF1/E2F transcription factor complex. Binds cooperatively with TFDP1/Dp-1 to E2F sites. Interacts with retinoblastoma protein RB1 and related proteins (such as RBL1) that inhibit the E2F transactivation domain. Binds EAPP.

Its subcellular location is the nucleus. Its function is as follows. Transcription activator that binds DNA cooperatively with DP proteins through the E2 recognition site, 5'-TTTC[CG]CGC-3' found in the promoter region of a number of genes whose products are involved in cell cycle regulation or in DNA replication. The DRTF1/E2F complex functions in the control of cell-cycle progression from G1 to S phase. E2F3 binds specifically to RB1 in a cell-cycle dependent manner. Inhibits adipogenesis, probably through the repression of CEBPA binding to its target gene promoters. The sequence is that of Transcription factor E2F3 (E2f3) from Mus musculus (Mouse).